The following is a 432-amino-acid chain: Peptidase B (432 aa).

Residues lysine 196 and aspartate 201 each contribute to the Mn(2+) site. Lysine 208 is an active-site residue. Residues aspartate 219, aspartate 278, and glutamate 280 each coordinate Mn(2+). The active site involves arginine 282.

It belongs to the peptidase M17 family. As to quaternary structure, homohexamer. Mn(2+) is required as a cofactor.

It is found in the cytoplasm. It carries out the reaction Release of an N-terminal amino acid, Xaa, from a peptide or arylamide. Xaa is preferably Glu or Asp but may be other amino acids, including Leu, Met, His, Cys and Gln.. Its function is as follows. Probably plays an important role in intracellular peptide degradation. In Vibrio parahaemolyticus serotype O3:K6 (strain RIMD 2210633), this protein is Peptidase B.